Here is a 346-residue protein sequence, read N- to C-terminus: tRNA N6-adenosine threonylcarbamoyltransferase (346 aa).

Fe cation contacts are provided by histidine 111 and histidine 115. Substrate contacts are provided by residues 134–138 (LVSGG), aspartate 167, glycine 180, aspartate 184, and asparagine 279. Aspartate 307 serves as a coordination point for Fe cation.

It belongs to the KAE1 / TsaD family. Requires Fe(2+) as cofactor.

It localises to the cytoplasm. The enzyme catalyses L-threonylcarbamoyladenylate + adenosine(37) in tRNA = N(6)-L-threonylcarbamoyladenosine(37) in tRNA + AMP + H(+). Its function is as follows. Required for the formation of a threonylcarbamoyl group on adenosine at position 37 (t(6)A37) in tRNAs that read codons beginning with adenine. Is involved in the transfer of the threonylcarbamoyl moiety of threonylcarbamoyl-AMP (TC-AMP) to the N6 group of A37, together with TsaE and TsaB. TsaD likely plays a direct catalytic role in this reaction. This is tRNA N6-adenosine threonylcarbamoyltransferase from Trichormus variabilis (strain ATCC 29413 / PCC 7937) (Anabaena variabilis).